We begin with the raw amino-acid sequence, 397 residues long: Major outer membrane porin, serovar H (397 aa).

The signal sequence occupies residues 1–22 (MKKLLKSVLVFAALSSASSLQA).

This sequence belongs to the chlamydial porin (CP) (TC 1.B.2) family. In terms of assembly, part of a disulfide cross-linked outer membrane complex (COMC) composed of the major outer membrane porin (MOMP), the small cysteine-rich protein (OmcA) and the large cysteine-rich periplasmic protein (OmcB).

It localises to the cell outer membrane. In elementary bodies (EBs, the infectious stage, which is able to survive outside the host cell) provides the structural integrity of the outer envelope through disulfide cross-links with the small cysteine-rich protein and the large cysteine-rich periplasmic protein. It has been described in publications as the Sarkosyl-insoluble COMC (Chlamydia outer membrane complex), and serves as the functional equivalent of peptidoglycan. In terms of biological role, permits diffusion of specific solutes through the outer membrane. The chain is Major outer membrane porin, serovar H (ompA) from Chlamydia trachomatis.